The sequence spans 794 residues: Protein sel-1 homolog 1 (794 aa).

The N-terminal stretch at 1–21 (MRVRIGLTLLLCAVLLSLASA) is a signal peptide. Residues 21 to 50 (ASSDEEGSQDESLDSKTTLTSDESVKDHTT) form a disordered region. The interval 22 to 737 (SSDEEGSQDE…DMFTQLDMDQ (716 aa)) is interaction with ERLEC1, OS9 and SYVN1. Over 22 to 738 (SSDEEGSQDE…MFTQLDMDQL (717 aa)) the chain is Lumenal. The span at 23–32 (SDEEGSQDES) shows a compositional bias: acidic residues. Ser63 bears the Phosphoserine mark. Residues 64 to 77 (EESELESSIQEEED) show a composition bias toward acidic residues. A disordered region spans residues 64 to 109 (EESELESSIQEEEDSLKSQEGESVTEDISFLESPNPENKDYEEPKK). The Fibronectin type-II domain occupies 122 to 170 (AHGEPCHFPFLFLDKEYDECTSDGREDGRLWCATTYDYKADEKWGFCET). Intrachain disulfides connect Cys127–Cys153 and Cys141–Cys168. Sel1-like repeat units follow at residues 183–218 (AEMM…SMNH), 219–254 (TKAL…EEGS), 255–290 (PKGQ…LGGN), 291–326 (LIAH…NHVA), 373–409 (VQAQ…NAGN), 410–446 (SHAM…DMGN), 447–482 (PVGQ…EQGW), 483–518 (VDGQ…QGGH), and 519–554 (ILAF…ERGR). 2 N-linked (GlcNAc...) asparagine glycosylation sites follow: Asn195 and Asn217. An N-linked (GlcNAc...) asparagine glycan is attached at Asn272. The segment at 352–537 (NSGMLEEDLI…MHASGTGVMR (186 aa)) is important for homodimerization and oligomerization. Asn431 is a glycosylation site (N-linked (GlcNAc...) asparagine). Asn608 is a glycosylation site (N-linked (GlcNAc...) asparagine). 2 Sel1-like repeats span residues 627–662 (TVAR…EQQH) and 664–699 (AQAM…EASP). The tract at residues 643 to 723 (TDVDYETAFI…VVYFLQYIRE (81 aa)) is interaction with SYVN1. The interval 738–794 (LLGPEWDLYLMTIIALLLGTVIAYRQRQHQDMPAPRPPGPRPAPPQQEGPPEQQPPQ) is mediates retention in the endoplasmic reticulum. The chain crosses the membrane as a helical span at residues 739–759 (LGPEWDLYLMTIIALLLGTVI). Over 760–794 (AYRQRQHQDMPAPRPPGPRPAPPQQEGPPEQQPPQ) the chain is Cytoplasmic. The segment at 766–794 (HQDMPAPRPPGPRPAPPQQEGPPEQQPPQ) is disordered. Positions 771-794 (APRPPGPRPAPPQQEGPPEQQPPQ) are enriched in pro residues.

The protein belongs to the sel-1 family. In terms of assembly, homodimer and homooligomer. May form a complex with ERLEC1, HSPA5, OS9, and SYVN1. Interacts with FOXRED2 and EDEM1. Interacts with LPL. Interacts with LMF1; may stabilize the complex formed by LPL and LMF1 and thereby promote the export of LPL dimers. Component of the HRD1 complex, which comprises at least SYNV1/HRD1, DERL1/2, FAM8A1, HERPUD1/HERP, OS9, SEL1L and UBE2J1. SYNV1 assembles with SEL1L and FAM8A1 through its transmembrane domains, but interaction with its cytoplasmic domain is required to confer stability to FAM8A1 and enhance recruitment of HERPUD1. The interaction with SYNV1/HRD1 is direct. (Microbial infection) Interacts with human cytomegalovirus protein UL148. Post-translationally, N-glycosylated. Highly expressed in pancreas.

The protein resides in the endoplasmic reticulum membrane. In terms of biological role, plays a role in the endoplasmic reticulum quality control (ERQC) system also called ER-associated degradation (ERAD) involved in ubiquitin-dependent degradation of misfolded endoplasmic reticulum proteins. Enhances SYVN1 stability. Plays a role in LPL maturation and secretion. Required for normal differentiation of the pancreas epithelium, and for normal exocrine function and survival of pancreatic cells. May play a role in Notch signaling. The chain is Protein sel-1 homolog 1 from Homo sapiens (Human).